The sequence spans 589 residues: Sulfite reductase [NADPH] hemoprotein beta-component (589 aa).

The [4Fe-4S] cluster site is built by Cys443, Cys449, Cys488, and Cys492. Cys492 is a binding site for siroheme.

Belongs to the nitrite and sulfite reductase 4Fe-4S domain family. As to quaternary structure, alpha(8)-beta(8). The alpha component is a flavoprotein, the beta component is a hemoprotein. Siroheme is required as a cofactor. Requires [4Fe-4S] cluster as cofactor.

The enzyme catalyses hydrogen sulfide + 3 NADP(+) + 3 H2O = sulfite + 3 NADPH + 4 H(+). The protein operates within sulfur metabolism; hydrogen sulfide biosynthesis; hydrogen sulfide from sulfite (NADPH route): step 1/1. Its function is as follows. Component of the sulfite reductase complex that catalyzes the 6-electron reduction of sulfite to sulfide. This is one of several activities required for the biosynthesis of L-cysteine from sulfate. The protein is Sulfite reductase [NADPH] hemoprotein beta-component of Neisseria meningitidis serogroup C / serotype 2a (strain ATCC 700532 / DSM 15464 / FAM18).